The chain runs to 417 residues: Phosphoglycerate kinase (417 aa).

Residues Val23, Asp24, Phe25, Asn26, Gln39, Arg40, Ser63, His64, Gly66, Arg67, Leu122, Arg123, His170, and Arg171 each contribute to the (2R)-3-phosphoglycerate site. Residue Gly214 coordinates ADP. Gly214 provides a ligand contact to CDP. 2 residues coordinate AMP: Ala215 and Lys216. An ATP-binding site is contributed by Ala215. A Mg(2+)-binding site is contributed by Ala215. Asp219 contacts CDP. Position 219 (Asp219) interacts with Mg(2+). Lys220 provides a ligand contact to AMP. Lys220 is a binding site for ATP. Gly238 is a binding site for ADP. A CDP-binding site is contributed by Gly238. Residues Ala239 and Gly313 each coordinate AMP. ATP is bound by residues Ala239 and Gly313. Residues Gly338 and Phe343 each coordinate CDP. Phe343 is an ADP binding site. Glu344 contributes to the AMP binding site. 3 residues coordinate ATP: Glu344, Asp375, and Thr376. Asp375 provides a ligand contact to Mg(2+).

This sequence belongs to the phosphoglycerate kinase family. Monomer. It depends on Mg(2+) as a cofactor.

Its subcellular location is the cytoplasm. It is found in the mitochondrion. The catalysed reaction is (2R)-3-phosphoglycerate + ATP = (2R)-3-phospho-glyceroyl phosphate + ADP. It functions in the pathway carbohydrate degradation; glycolysis; pyruvate from D-glyceraldehyde 3-phosphate: step 2/5. Its function is as follows. Catalyzes one of the two ATP producing reactions in the glycolytic pathway via the reversible conversion of 1,3-diphosphoglycerate to 3-phosphoglycerate. Both L- and D- forms of purine and pyrimidine nucleotides can be used as substrates, but the activity is much lower on pyrimidines. Negatively regulates the biosynthesis of acetyl-CoA from pyruvate in the mitochondrion. The sequence is that of Phosphoglycerate kinase (pgkA) from Aspergillus oryzae (strain ATCC 42149 / RIB 40) (Yellow koji mold).